Consider the following 256-residue polypeptide: tRNA pseudouridine synthase A 1 (256 aa).

D53 (nucleophile) is an active-site residue. Y111 serves as a coordination point for substrate.

The protein belongs to the tRNA pseudouridine synthase TruA family. In terms of assembly, homodimer.

It carries out the reaction uridine(38/39/40) in tRNA = pseudouridine(38/39/40) in tRNA. In terms of biological role, formation of pseudouridine at positions 38, 39 and 40 in the anticodon stem and loop of transfer RNAs. This Protochlamydia amoebophila (strain UWE25) protein is tRNA pseudouridine synthase A 1.